We begin with the raw amino-acid sequence, 228 residues long: A-type ATP synthase subunit D (228 aa).

Residues 205-214 (KKEEEEKAEA) are compositionally biased toward basic and acidic residues. Positions 205–228 (KKEEEEKAEAAAEAAAVEDPEPAD) are disordered.

This sequence belongs to the V-ATPase D subunit family. Has multiple subunits with at least A(3), B(3), C, D, E, F, H, I and proteolipid K(x).

It is found in the cell membrane. In terms of biological role, component of the A-type ATP synthase that produces ATP from ADP in the presence of a proton gradient across the membrane. This Halorubrum lacusprofundi (strain ATCC 49239 / DSM 5036 / JCM 8891 / ACAM 34) protein is A-type ATP synthase subunit D.